Here is a 614-residue protein sequence, read N- to C-terminus: UvrABC system protein C (614 aa).

The GIY-YIG domain occupies 14-91 (TSPGCYIHKD…IKENKPKYNI (78 aa)). The UVR domain occupies 196 to 231 (NKIIDELKGKMAAAAQTMEFERAAEYRDLIQAIGTL). The disordered stretch occupies residues 595 to 614 (LPQVAEERVDYQTEGNHNKP).

Belongs to the UvrC family. As to quaternary structure, interacts with UvrB in an incision complex.

It is found in the cytoplasm. Its function is as follows. The UvrABC repair system catalyzes the recognition and processing of DNA lesions. UvrC both incises the 5' and 3' sides of the lesion. The N-terminal half is responsible for the 3' incision and the C-terminal half is responsible for the 5' incision. The chain is UvrABC system protein C from Streptococcus pneumoniae (strain Taiwan19F-14).